Consider the following 350-residue polypeptide: Very-long-chain 3-oxoacyl-CoA reductase (350 aa).

The chain crosses the membrane as a helical span at residues 20–40 (ALLFSLLFGVFKLTTFTLRFA). The NADP(+) site is built by Val-66, Asp-120, Asn-147, Tyr-221, Lys-225, Val-254, and Ser-256. The active-site Proton donor is Tyr-221. The active-site Lowers pKa of active site Tyr is Lys-225.

This sequence belongs to the short-chain dehydrogenases/reductases (SDR) family.

Its subcellular location is the endoplasmic reticulum membrane. It carries out the reaction a very-long-chain (3R)-3-hydroxyacyl-CoA + NADP(+) = a very-long-chain 3-oxoacyl-CoA + NADPH + H(+). It functions in the pathway lipid metabolism; fatty acid biosynthesis. Functionally, component of the microsomal membrane bound fatty acid elongation system, which produces the 26-carbon very long-chain fatty acids (VLCFA) from palmitate. Catalyzes the reduction of the 3-ketoacyl-CoA intermediate that is formed in each cycle of fatty acid elongation. VLCFAs serve as precursors for ceramide and sphingolipids. This is Very-long-chain 3-oxoacyl-CoA reductase from Lodderomyces elongisporus (strain ATCC 11503 / CBS 2605 / JCM 1781 / NBRC 1676 / NRRL YB-4239) (Yeast).